We begin with the raw amino-acid sequence, 960 residues long: Dynamin-like GTPase OPA1, mitochondrial (960 aa).

The transit peptide at 1–87 (MWRAGRAALA…TKYGYQPRRN (87 aa)) directs the protein to the mitochondrion. Residues 88-96 (FWPARLAAR) are Mitochondrial matrix-facing. A helical membrane pass occupies residues 97–113 (LLKLRYIILGSAVGGGY). Over 114 to 770 (TAKKTFDEWK…NAIENMIGPD (657 aa)) the chain is Mitochondrial intermembrane. Residues 210-254 (SDKEKIDQLQEELLHTQLKYQRILERLEKENKELRKLVLQKDDKG) adopt a coiled-coil conformation. Residues 217-222 (QLQEEL) carry the LQQQIQ motif motif. N6-acetyllysine is present on Lys228. Residues 234–239 (ERLEKE) carry the LQQQIQ motif motif. The Dynamin-type G domain occupies 285–561 (QDHLPRVVVV…FWKMVRESVE (277 aa)). Residues 295–302 (GDQSAGKT) form a G1 motif region. Ser298, Gly300, Lys301, Thr302, Ser303, and Gly317 together coordinate GTP. Mg(2+) is bound at residue Thr302. Positions 321-324 (MMTR) are G2 motif. Residues Thr323 and Asp398 each coordinate Mg(2+). The G3 motif stretch occupies residues 398–401 (DLPG). Positions 467 to 470 (TKVD) are G4 motif. Positions 468, 470, and 503 each coordinate GTP. The G5 motif stretch occupies residues 501 to 504 (VVTG). Stalk region stretches follow at residues 589–836 (DRNE…IKDT) and 874–928 (CNDV…VKLL). Residues 736 to 856 (SDKQQWDAAI…KTALNHCNLC (121 aa)) form a paddle region region. The stretch at 771 to 781 (WKKRWIYWKNR) is an intramembrane region. The Mitochondrial intermembrane portion of the chain corresponds to 782–960 (TQEQCVHNET…AFIEALHQEK (179 aa)). Cysteines 856 and 874 form a disulfide. Residues 895–960 (RQQLTNTEVR…AFIEALHQEK (66 aa)) adopt a coiled-coil conformation.

It belongs to the TRAFAC class dynamin-like GTPase superfamily. Dynamin/Fzo/YdjA family. In terms of assembly, oligomeric complex consisting of membrane-bound and soluble forms of OPA1. Interacts with RCC1L; RCC1L acts as a guanine nucleotide exchange factor (GEF) for OPA1 by exchanging bound GDP for free GTP. Interacts with CHCHD3 and IMMT; these interactions occur preferentially with soluble OPA1 forms. Interacts with PRELID1. Cleaved by OMA1 or YME1L downstream of the transmembrane region in response to different signals to generate soluble forms. Cleaved by OMA1 at position S1 following stress conditions, generating the short soluble form (Dynamin-like GTPase OPA1, short form; S-OPA1). AFG3L2 is involved in the regulation of OMA1-dependent processing of OPA1. PARL-dependent proteolytic processing releases an antiapoptotic soluble form not required for mitochondrial fusion. In terms of processing, cleavage at position S2 by YME1L is required to mediate oxidative phosphorylation (OXPHOS)-induced mitochondrial fusion. Cleavage occurs in the sequence motif Leu-Gln-Gln-Gln-Ile-Gln (LQQQIQ). In terms of tissue distribution, expressed in brain as well as retinal ganglion, starbust amacrine and horizontal cells of the retina. Absent from nerve fibers and photoreceptor cells of the retina.

It localises to the mitochondrion inner membrane. Its subcellular location is the mitochondrion intermembrane space. The catalysed reaction is GTP + H2O = GDP + phosphate + H(+). With respect to regulation, activated by guanine nucleotide exchange factor RCC1L. In terms of biological role, dynamin-related GTPase that is essential for normal mitochondrial morphology by mediating fusion of the mitochondrial inner membranes, regulating cristae morphology and maintaining respiratory chain function. Exists in two forms: the transmembrane, long form (Dynamin-like GTPase OPA1, long form; L-OPA1), which is tethered to the inner mitochondrial membrane, and the short soluble form (Dynamin-like GTPase OPA1, short form; S-OPA1), which results from proteolytic cleavage and localizes in the intermembrane space. Both forms (L-OPA1 and S-OPA1) cooperate to catalyze the fusion of the mitochondrial inner membrane. The equilibrium between L-OPA1 and S-OPA1 is essential: excess levels of S-OPA1, produced by cleavage by OMA1 following loss of mitochondrial membrane potential, lead to an impaired equilibrium between L-OPA1 and S-OPA1, inhibiting mitochondrial fusion. The balance between L-OPA1 and S-OPA1 also influences cristae shape and morphology. Involved in remodeling cristae and the release of cytochrome c during apoptosis. Proteolytic processing by PARL in response to intrinsic apoptotic signals may lead to disassembly of OPA1 oligomers and release of the caspase activator cytochrome C (CYCS) into the mitochondrial intermembrane space. Acts as a regulator of T-helper Th17 cells, which are characterized by cells with fused mitochondria with tight cristae, by mediating mitochondrial membrane remodeling: OPA1 is required for interleukin-17 (IL-17) production. Its role in mitochondrial morphology is required for mitochondrial genome maintenance. Functionally, constitutes the transmembrane long form (L-OPA1) that plays a central role in mitochondrial inner membrane fusion and cristae morphology. L-OPA1 and the soluble short form (S-OPA1) form higher-order helical assemblies that coordinate the fusion of mitochondrial inner membranes. Inner membrane-anchored L-OPA1 molecules initiate membrane remodeling by recruiting soluble S-OPA1 to rapidly polymerize into a flexible cylindrical scaffold encaging the mitochondrial inner membrane. Once at the membrane surface, the formation of S-OPA1 helices induce bilayer curvature. OPA1 dimerization through the paddle region, which inserts into cardiolipin-containing membrane, promotes GTP hydrolysis and the helical assembly of a flexible OPA1 lattice on the membrane, which drives membrane curvature and mitochondrial fusion. Plays a role in the maintenance and remodeling of mitochondrial cristae, some invaginations of the mitochondrial inner membrane that provide an increase in the surface area. Probably acts by forming helical filaments at the inside of inner membrane tubes with the shape and dimensions of crista junctions. The equilibrium between L-OPA1 and S-OPA1 influences cristae shape and morphology: increased L-OPA1 levels promote cristae stacking and elongated mitochondria, while increased S-OPA1 levels correlated with irregular cristae packing and round mitochondria shape. Constitutes the soluble short form (S-OPA1) generated by cleavage by OMA1, which plays a central role in mitochondrial inner membrane fusion and cristae morphology. The transmembrane long form (L-OPA1) and the S-OPA1 form higher-order helical assemblies that coordinate the fusion of mitochondrial inner membranes. Inner membrane-anchored L-OPA1 molecules initiate membrane remodeling by recruiting soluble S-OPA1 to rapidly polymerize into a flexible cylindrical scaffold encaging the mitochondrial inner membrane. Once at the membrane surface, the formation of S-OPA1 helices induce bilayer curvature. OPA1 dimerization through the paddle region, which inserts into cardiolipin-containing membrane, promotes GTP hydrolysis and the helical assembly of a flexible OPA1 lattice on the membrane, which drives membrane curvature and mitochondrial fusion. Excess levels of S-OPA1 produced by cleavage by OMA1 following stress conditions that induce loss of mitochondrial membrane potential, lead to an impaired equilibrium between L-OPA1 and S-OPA1, thereby inhibiting mitochondrial fusion. Involved in mitochondrial safeguard in response to transient mitochondrial membrane depolarization by mediating flickering: cleavage by OMA1 leads to excess production of S-OPA1, preventing mitochondrial hyperfusion. Plays a role in the maintenance and remodeling of mitochondrial cristae, some invaginations of the mitochondrial inner membrane that provide an increase in the surface area. Probably acts by forming helical filaments at the inside of inner membrane tubes with the shape and dimensions of crista junctions. The equilibrium between L-OPA1 and S-OPA1 influences cristae shape and morphology: increased L-OPA1 levels promote cristae stacking and elongated mitochondria, while increased S-OPA1 levels correlated with irregular cristae packing and round mitochondria shape. Its function is as follows. Isoforms that contain the alternative exon 4b are required for mitochondrial genome maintenance, possibly by anchoring the mitochondrial nucleoids to the inner mitochondrial membrane. The protein is Dynamin-like GTPase OPA1, mitochondrial of Rattus norvegicus (Rat).